A 513-amino-acid chain; its full sequence is MATTVDSRSSGFTGNSCDPGTAQEHVQAVTRNYITHPRVTYRTVCSVNGPLVVLDQVKFAQYAEIVNFTLPDGTQRSGQVLEVAGTKAIVQVFEGTSGIDSQKTTCEFTGDILRTPVSEDMLGRIFNGSGKPIDKGPAVMAEEFLDINGQPINPHDRIYPEEMIQTGISPIDVMNSIARGQKIPIFSAAGLPHNEIAAQICRQAGLVKKSKAVLDYHEDNFAIVFAAMGVNMETARFFKSDFEQNGTMGNVCLFLNLANDPTIERIITPRLALTTAEFLAYQCEKHVLVILTDMSSYAEALREVSAAREEVPGRRGFPGYMYTDLATIYERAGRVEGRGGSITQIPILTMPNDDITHPIPDLTGFITEGQIYVDRQLHNRQVYPPINVLPSLSRLMKSAIGEGMTRKDHGDVSNQLYACYAIGKDVQAMKAVVGEEALTSEDLLYLEFLQKFEKNFITQGPYENRTVFESLDLGWKLLRIFPKEMLKRIPQSMTDEFYSRQGAQQDPASDTAL.

A compositionally biased stretch (polar residues) spans 1–18 (MATTVDSRSSGFTGNSCD). The interval 1–21 (MATTVDSRSSGFTGNSCDPGT) is disordered. Position 394 (Arg394) interacts with ATP. The short motif at 510-513 (DTAL) is the PDZ-binding element.

This sequence belongs to the ATPase alpha/beta chains family. As to quaternary structure, V-ATPase is a heteromultimeric enzyme made up of two complexes: the ATP-hydrolytic V1 complex and the proton translocation V0 complex. The V1 complex consists of three catalytic AB heterodimers that form a heterohexamer, three peripheral stalks each consisting of EG heterodimers, one central rotor including subunits D and F, and the regulatory subunits C and H. The proton translocation complex V0 consists of the proton transport subunit a, a ring of proteolipid subunits c9c'', rotary subunit d, subunits e and f, and the accessory subunits ATP6AP1/Ac45 and ATP6AP2/PRR. Forms a complex with NHERF1 and SCL4A7. In terms of tissue distribution, highly expressed in the kidney; found in early distal nephron, encompassing thick ascending limbs and distal convoluted tubules and in the alpha-intercalated cells of the cortical collecting ducts (at protein level). Expressed in the olfactory epithelium (at protein level). Expressed at lower levels in the testis.

It is found in the apical cell membrane. It localises to the basolateral cell membrane. Non-catalytic subunit of the V1 complex of vacuolar(H+)-ATPase (V-ATPase), a multisubunit enzyme composed of a peripheral complex (V1) that hydrolyzes ATP and a membrane integral complex (V0) that translocates protons. V-ATPase is responsible for acidifying and maintaining the pH of intracellular compartments and in some cell types, is targeted to the plasma membrane, where it is responsible for acidifying the extracellular environment. Essential for the proper assembly and activity of V-ATPase. In renal intercalated cells, mediates secretion of protons (H+) into the urine thereby ensuring correct urinary acidification. Required for optimal olfactory function by mediating the acidification of the nasal olfactory epithelium. This is V-type proton ATPase subunit B, kidney isoform (Atp6v1b1) from Mus musculus (Mouse).